Here is a 270-residue protein sequence, read N- to C-terminus: 3-methyl-2-oxobutanoate hydroxymethyltransferase (270 aa).

The Mg(2+) site is built by aspartate 53 and aspartate 92. 3-methyl-2-oxobutanoate-binding positions include 53–54, aspartate 92, and lysine 120; that span reads DS. A Mg(2+)-binding site is contributed by glutamate 122. Glutamate 189 functions as the Proton acceptor in the catalytic mechanism.

This sequence belongs to the PanB family. As to quaternary structure, homodecamer; pentamer of dimers. The cofactor is Mg(2+).

It is found in the cytoplasm. It catalyses the reaction 3-methyl-2-oxobutanoate + (6R)-5,10-methylene-5,6,7,8-tetrahydrofolate + H2O = 2-dehydropantoate + (6S)-5,6,7,8-tetrahydrofolate. Its pathway is cofactor biosynthesis; (R)-pantothenate biosynthesis; (R)-pantoate from 3-methyl-2-oxobutanoate: step 1/2. Catalyzes the reversible reaction in which hydroxymethyl group from 5,10-methylenetetrahydrofolate is transferred onto alpha-ketoisovalerate to form ketopantoate. The polypeptide is 3-methyl-2-oxobutanoate hydroxymethyltransferase (Saccharophagus degradans (strain 2-40 / ATCC 43961 / DSM 17024)).